We begin with the raw amino-acid sequence, 130 residues long: Small ribosomal subunit protein uS9 (130 aa).

Belongs to the universal ribosomal protein uS9 family.

This chain is Small ribosomal subunit protein uS9, found in Xanthomonas axonopodis pv. citri (strain 306).